A 217-amino-acid chain; its full sequence is Probable transaldolase (217 aa).

Residue Lys83 is the Schiff-base intermediate with substrate of the active site.

It belongs to the transaldolase family. Type 3B subfamily.

It localises to the cytoplasm. The catalysed reaction is D-sedoheptulose 7-phosphate + D-glyceraldehyde 3-phosphate = D-erythrose 4-phosphate + beta-D-fructose 6-phosphate. The protein operates within carbohydrate degradation; pentose phosphate pathway; D-glyceraldehyde 3-phosphate and beta-D-fructose 6-phosphate from D-ribose 5-phosphate and D-xylulose 5-phosphate (non-oxidative stage): step 2/3. Functionally, transaldolase is important for the balance of metabolites in the pentose-phosphate pathway. In Caulobacter sp. (strain K31), this protein is Probable transaldolase.